We begin with the raw amino-acid sequence, 248 residues long: Cobalt transport protein CbiM (248 aa).

Positions 1–29 are cleaved as a signal peptide; that stretch reads MKRVSVKNYLVCLLIAVCAIFVFPANASA. Helical transmembrane passes span 40 to 60, 72 to 92, 104 to 124, 136 to 156, 167 to 187, and 210 to 230; these read GWCI…FFSI, TLLA…MPSV, LGAV…ILLF, TLGA…FGVF, GLAV…ITSV, and IFGF…VVIY.

Belongs to the CbiM family. In terms of assembly, forms an energy-coupling factor (ECF) transporter complex composed of an ATP-binding protein (A component, CbiO), a transmembrane protein (T component, CbiQ) and 2 possible substrate-capture proteins (S components, CbiM and CbiN) of unknown stoichimetry.

It localises to the cell membrane. It functions in the pathway cofactor biosynthesis; adenosylcobalamin biosynthesis. Its function is as follows. Part of the energy-coupling factor (ECF) transporter complex CbiMNOQ involved in cobalt import. The protein is Cobalt transport protein CbiM of Ruminiclostridium cellulolyticum (strain ATCC 35319 / DSM 5812 / JCM 6584 / H10) (Clostridium cellulolyticum).